We begin with the raw amino-acid sequence, 370 residues long: Aminomethyltransferase (370 aa).

Belongs to the GcvT family. In terms of assembly, the glycine cleavage system is composed of four proteins: P, T, L and H.

It catalyses the reaction N(6)-[(R)-S(8)-aminomethyldihydrolipoyl]-L-lysyl-[protein] + (6S)-5,6,7,8-tetrahydrofolate = N(6)-[(R)-dihydrolipoyl]-L-lysyl-[protein] + (6R)-5,10-methylene-5,6,7,8-tetrahydrofolate + NH4(+). The glycine cleavage system catalyzes the degradation of glycine. The chain is Aminomethyltransferase from Stenotrophomonas maltophilia (strain K279a).